A 647-amino-acid chain; its full sequence is DNA ligase (647 aa).

Residues 30 to 34 (DEEYD), 79 to 80 (SM), and E105 contribute to the NAD(+) site. K107 acts as the N6-AMP-lysine intermediate in catalysis. NAD(+) is bound by residues R128, E162, and K301. 4 residues coordinate Zn(2+): C395, C398, C411, and C416. Residues 570-647 (KSDSVIFGKT…ESAFNELVKE (78 aa)) form the BRCT domain.

The protein belongs to the NAD-dependent DNA ligase family. LigA subfamily. Requires Mg(2+) as cofactor. The cofactor is Mn(2+).

The enzyme catalyses NAD(+) + (deoxyribonucleotide)n-3'-hydroxyl + 5'-phospho-(deoxyribonucleotide)m = (deoxyribonucleotide)n+m + AMP + beta-nicotinamide D-nucleotide.. Functionally, DNA ligase that catalyzes the formation of phosphodiester linkages between 5'-phosphoryl and 3'-hydroxyl groups in double-stranded DNA using NAD as a coenzyme and as the energy source for the reaction. It is essential for DNA replication and repair of damaged DNA. The sequence is that of DNA ligase from Campylobacter jejuni subsp. doylei (strain ATCC BAA-1458 / RM4099 / 269.97).